Reading from the N-terminus, the 128-residue chain is Glycine cleavage system H protein (128 aa).

Residues 24 to 105 (SLTIGVTDHA…AYAAWLFKLK (82 aa)) enclose the Lipoyl-binding domain. At lysine 65 the chain carries N6-lipoyllysine.

It belongs to the GcvH family. As to quaternary structure, the glycine cleavage system is composed of four proteins: P, T, L and H. The cofactor is (R)-lipoate.

The glycine cleavage system catalyzes the degradation of glycine. The H protein shuttles the methylamine group of glycine from the P protein to the T protein. This chain is Glycine cleavage system H protein, found in Aromatoleum aromaticum (strain DSM 19018 / LMG 30748 / EbN1) (Azoarcus sp. (strain EbN1)).